The sequence spans 340 residues: Erlin-2 (340 aa).

The Cytoplasmic portion of the chain corresponds to 1–3 (MAQ). The chain crosses the membrane as a helical span at residues 4–24 (LGAVVAVASSFFCASLFSAVH). At 25 to 340 (KIEEGHIGVY…EPLEAPTKEN (316 aa)) the chain is on the lumenal side. N-linked (GlcNAc...) asparagine glycosylation occurs at asparagine 106. The segment at 177–309 (EAIRRNYELM…DIPNMFMDSA (133 aa)) is interaction with ERLIN1. An N6-acetyllysine modification is found at lysine 267.

This sequence belongs to the band 7/mec-2 family. In terms of assembly, forms a heteromeric complex with ERLIN1. In complex with ERLIN1, interacts with RNF170. Interacts with activated ITPR1, independently of the degree of ITPR1 polyubiquitination. Interacts with SCAP, INSIG1, SREBF1 and SREBF2 under cholesterol sufficiency conditions; indicative for an association with the SCAP-SREBP-INSIG complex. Probably part of an AMFR/gp78 and INSIG1-containing ubiquitin ligase complex involved in ERAD of HMGCR. Interacts with TMUB1; TMUB1 bridges the association with AMFR. Interacts with SYVN1 and RNF139. Interacts with TMEM259. Interacts with TMEM41B. Post-translationally, deubiquitinated by USP25; leading to stabilization.

Its subcellular location is the endoplasmic reticulum membrane. In terms of biological role, component of the ERLIN1/ERLIN2 complex which mediates the endoplasmic reticulum-associated degradation (ERAD) of inositol 1,4,5-trisphosphate receptors (IP3Rs) such as ITPR1. Promotes sterol-accelerated ERAD of HMGCR probably implicating an AMFR/gp78-containing ubiquitin ligase complex. Involved in regulation of cellular cholesterol homeostasis by regulation the SREBP signaling pathway. May promote ER retention of the SCAP-SREBF complex. The chain is Erlin-2 (Erlin2) from Mus musculus (Mouse).